Reading from the N-terminus, the 264-residue chain is Shikimate dehydrogenase (NADP(+)) (264 aa).

Shikimate is bound by residues 14 to 16 and threonine 59; that span reads SLS. Lysine 63 acts as the Proton acceptor in catalysis. Position 75 (glutamate 75) interacts with NADP(+). Residues asparagine 84 and aspartate 99 each contribute to the shikimate site. Residues 122 to 126, 144 to 149, and isoleucine 205 contribute to the NADP(+) site; these read GAGGA and NRTPSK. Tyrosine 207 lines the shikimate pocket. Glycine 228 provides a ligand contact to NADP(+).

The protein belongs to the shikimate dehydrogenase family. In terms of assembly, homodimer.

It catalyses the reaction shikimate + NADP(+) = 3-dehydroshikimate + NADPH + H(+). It functions in the pathway metabolic intermediate biosynthesis; chorismate biosynthesis; chorismate from D-erythrose 4-phosphate and phosphoenolpyruvate: step 4/7. Functionally, involved in the biosynthesis of the chorismate, which leads to the biosynthesis of aromatic amino acids. Catalyzes the reversible NADPH linked reduction of 3-dehydroshikimate (DHSA) to yield shikimate (SA). The sequence is that of Shikimate dehydrogenase (NADP(+)) from Pyrococcus abyssi (strain GE5 / Orsay).